The chain runs to 414 residues: Calcium/calmodulin-dependent protein kinase cmkA (414 aa).

Positions 23–278 (YRFGRTLGAG…SEEALKHPWL (256 aa)) constitute a Protein kinase domain. Residues 29–37 (LGAGTYGIV) and Lys-50 contribute to the ATP site. Asp-142 serves as the catalytic Proton acceptor. Residues 278–314 (LKGESASDRDLLPEIRAYIARSRLKRGIEIIKLANRI) form an autoinhibitory domain region. The calmodulin-binding stretch occupies residues 293–315 (RAYIARSRLKRGIEIIKLANRIE). Disordered stretches follow at residues 320 to 375 (QEED…KRSL) and 394 to 414 (EMKENEEREKVEREARERAHS). Positions 351-364 (STENSNTHPASTGN) are enriched in polar residues.

The protein belongs to the protein kinase superfamily. CAMK Ser/Thr protein kinase family. CaMK subfamily. In terms of assembly, monomer. In terms of processing, autophosphorylated in a calcium/calmodulin-dependent manner.

The catalysed reaction is L-seryl-[protein] + ATP = O-phospho-L-seryl-[protein] + ADP + H(+). The enzyme catalyses L-threonyl-[protein] + ATP = O-phospho-L-threonyl-[protein] + ADP + H(+). Activated by Ca(2+)/calmodulin. Binding of calmodulin may relieve intrasteric autoinhibition. Functionally, calcium/calmodulin-dependent protein kinase. Required in nuclear division cycle for progression from G2 to mitosis. Required for hyphal growth. The polypeptide is Calcium/calmodulin-dependent protein kinase cmkA (cmkA) (Emericella nidulans (strain FGSC A4 / ATCC 38163 / CBS 112.46 / NRRL 194 / M139) (Aspergillus nidulans)).